Here is a 587-residue protein sequence, read N- to C-terminus: Arginine--tRNA ligase (587 aa).

The 'HIGH' region signature appears at 127–137 (PNLAKEMHVGH).

The protein belongs to the class-I aminoacyl-tRNA synthetase family. As to quaternary structure, monomer.

It is found in the cytoplasm. The enzyme catalyses tRNA(Arg) + L-arginine + ATP = L-arginyl-tRNA(Arg) + AMP + diphosphate. This chain is Arginine--tRNA ligase, found in Pseudomonas aeruginosa (strain ATCC 15692 / DSM 22644 / CIP 104116 / JCM 14847 / LMG 12228 / 1C / PRS 101 / PAO1).